The following is a 535-amino-acid chain: Estrogen receptor (535 aa).

The tract at residues Ser1 to Thr21 is disordered. The interval Ser1–Tyr104 is modulating. Residues Ser12–Thr21 are compositionally biased toward polar residues. 2 consecutive NR C4-type zinc fingers follow at residues Cys105 to Cys125 and Cys141 to Cys165. Residues Cys105–Met170 constitute a DNA-binding region (nuclear receptor). Positions Val171 to Met236 are hinge. The interval Asp187–Trp229 is disordered. A compositionally biased stretch (basic and acidic residues) spans Gly195–Thr208. Residues Gly214–Leu223 are compositionally biased toward low complexity. Positions Pro237–His473 constitute an NR LBD domain. The interval Pro478 to Pro535 is disordered. Low complexity predominate over residues Ser492 to Ser502. Polar residues predominate over residues Gly525 to Pro535.

The protein belongs to the nuclear hormone receptor family. NR3 subfamily. Binds DNA as a homodimer. Can form a heterodimer with ER-beta. As to expression, highest expression in brain and liver.

The protein localises to the nucleus. The steroid hormones and their receptors are involved in the regulation of eukaryotic gene expression and affect cellular proliferation and differentiation in target tissues. This chain is Estrogen receptor (esr1), found in Salmo salar (Atlantic salmon).